Reading from the N-terminus, the 89-residue chain is Small ribosomal subunit protein uS14 (89 aa).

It belongs to the universal ribosomal protein uS14 family. As to quaternary structure, part of the 30S ribosomal subunit. Contacts proteins S3 and S10.

Functionally, binds 16S rRNA, required for the assembly of 30S particles and may also be responsible for determining the conformation of the 16S rRNA at the A site. The polypeptide is Small ribosomal subunit protein uS14 (Chloroherpeton thalassium (strain ATCC 35110 / GB-78)).